Here is a 148-residue protein sequence, read N- to C-terminus: Putative lysozyme C-2 (148 aa).

The first 18 residues, 1–18, serve as a signal peptide directing secretion; sequence MKALLVLGFLLLSASVQA. Positions 19-148 constitute a C-type lysozyme domain; sequence KVFKHCELAR…LSGYIRNCGV (130 aa). Cystine bridges form between C24–C146, C48–C134, C83–C99, and C95–C113. Active-site residues include E53 and D71.

It belongs to the glycosyl hydrolase 22 family. In terms of assembly, monomer.

The protein localises to the secreted. The enzyme catalyses Hydrolysis of (1-&gt;4)-beta-linkages between N-acetylmuramic acid and N-acetyl-D-glucosamine residues in a peptidoglycan and between N-acetyl-D-glucosamine residues in chitodextrins.. In terms of biological role, lysozymes have primarily a bacteriolytic function; those in tissues and body fluids are associated with the monocyte-macrophage system and enhance the activity of immunoagents. In the intestine they may also have a digestive function. In Rattus norvegicus (Rat), this protein is Putative lysozyme C-2 (Lyz2).